Consider the following 366-residue polypeptide: G kinase-anchoring protein 1 (366 aa).

The segment at 1–95 is interaction with IRS1; that stretch reads MASAVLSSVP…SHAVCNAQHD (95 aa). Disordered stretches follow at residues 20–110 and 147–177; these read QVDS…REEN and EYED…DRPL. A phosphoserine mark is found at serine 23, serine 25, and serine 27. Positions 39–50 are enriched in polar residues; it reads TGKSQTLGSKST. A coiled-coil region spans residues 47–77; it reads SKSTTNEKKREKRRKKKEQQQSEANELRNLA. At serine 106 the chain carries Phosphoserine; by PKG. Coiled-coil stretches lie at residues 128 to 160 and 243 to 353; these read ADLE…QSKV and EHNQ…YQGG.

It belongs to the GKAP1 family. In terms of assembly, interacts with PRKG1 and IRS1.

It is found in the golgi apparatus. Regulates insulin-dependent IRS1 tyrosine phosphorylation in adipocytes by modulating the availability of IRS1 to IR tyrosine kinase. Its association with IRS1 is required for insulin-induced translocation of SLC2A4 to the cell membrane. Involved in TNF-induced impairment of insulin-dependent IRS1 tyrosine phosphorylation. In Homo sapiens (Human), this protein is G kinase-anchoring protein 1 (GKAP1).